A 353-amino-acid polypeptide reads, in one-letter code: MCGRTSCHLPREVLTRACAYQDRQGRRRLPQWRDPDKYCPSYNKSPQSSSPVLLSRLHFEKDADSSDRIIIPMRWGLVPSWFKESDPSKLQFNTTNCRSDTIMEKQSFKVPLGKGRRCVVLADGFYEWQRCQGTNQRQPYFIYFPQIKTEKSGGNDASDSSDNKEKVWDNWRLLTMAGIFDCWEAPGGECLYSYSIITVDSCRGLSDIHSRMPAILDGEEAVSKWLDFGEVATQEALKLIHPIDNITFHPVSPVVNNSRNNTPECLAPADLLVKKEPKANGSSQRMMQWLATKSPKKEVPDSPKKDASGLPQWSSQFLQKSPLPAKRGATSSFLDRWLKQEKEDEPMAKKPNS.

Cys2 acts as the Nucleophile in catalysis. The residue at position 2 (Cys2) is a Thiazolidine linkage to a ring-opened DNA abasic site. The active site involves Glu127. Glycyl lysine isopeptide (Lys-Gly) (interchain with G-Cter in SUMO2) cross-links involve residues Lys148 and Lys151. At Ser160 the chain carries Phosphoserine. Glycyl lysine isopeptide (Lys-Gly) (interchain with G-Cter in SUMO2) cross-links involve residues Lys274 and Lys275. The tract at residues 292-353 is disordered; the sequence is TKSPKKEVPD…DEPMAKKPNS (62 aa). Ser294 is subject to Phosphoserine. Basic and acidic residues predominate over residues 295–307; that stretch reads PKKEVPDSPKKDA. Residue Lys305 forms a Glycyl lysine isopeptide (Lys-Gly) (interchain with G-Cter in SUMO2) linkage. The residue at position 321 (Ser321) is a Phosphoserine. The PIP-box motif lies at 332 to 338; it reads SFLDRWL. Residues 336–353 are compositionally biased toward basic and acidic residues; sequence RWLKQEKEDEPMAKKPNS. Glycyl lysine isopeptide (Lys-Gly) (interchain with G-Cter in SUMO2) cross-links involve residues Lys339 and Lys342.

Belongs to the SOS response-associated peptidase family. As to quaternary structure, interacts (via PIP-box motif) with PCNA. In terms of tissue distribution, expressed in embryonic stem cells.

The protein localises to the chromosome. With respect to regulation, formation and reversal of DNA-protein cross-link depends on DNA context. Catalyzes formation of the thiazolidine linkage in presence of abasic sites in single-stranded DNA. Mediates the reversal of the thiazolidine cross-link in presence of double stranded DNA. Functionally, sensor of abasic sites in single-stranded DNA (ssDNA) required to preserve genome integrity by promoting error-free repair of abasic sites. Acts as an enzyme that recognizes and binds abasic sites in ssDNA at replication forks and chemically modifies the lesion by forming a covalent cross-link with DNA: forms a stable thiazolidine linkage between a ring-opened abasic site and the alpha-amino and sulfhydryl substituents of its N-terminal catalytic cysteine residue. Promotes error-free repair by protecting abasic sites from translesion synthesis (TLS) polymerases and endonucleases that are error-prone and would generate mutations and double-strand breaks. The HMCES DNA-protein cross-link is then either reversed or degraded. HMCES is able to catalyze the reversal of its thiazolidine cross-link and cycle between a cross-link and a non-cross-linked state depending on DNA context: mediates self-reversal of the thiazolidine cross-link in double stranded DNA, allowing APEX1 to initiate downstream repair of abasic sites. The HMCES DNA-protein cross-link can also be degraded by the SPRTN metalloprotease following unfolding by the BRIP1/FANCJ helicase. Has preference for ssDNA, but can also accommodate double-stranded DNA with 3' or 5' overhang (dsDNA), and dsDNA-ssDNA 3' junction. Plays a protective role during somatic hypermutation of immunoglobulin genes in B-cells: acts via its ability to form covalent cross-links with abasic sites, thereby limiting the accumulation of deletions in somatic hypermutation target regions. Also involved in class switch recombination (CSR) in B-cells independently of the formation of a DNA-protein cross-link: acts by binding and protecting ssDNA overhangs to promote DNA double-strand break repair through the microhomology-mediated alternative-end-joining (Alt-EJ) pathway. Acts as a protease: mediates autocatalytic processing of its N-terminal methionine in order to expose the catalytic cysteine. The polypeptide is Abasic site processing protein HMCES (Mus musculus (Mouse)).